A 632-amino-acid chain; its full sequence is tRNA uridine 5-carboxymethylaminomethyl modification enzyme MnmG (632 aa).

FAD contacts are provided by residues 15 to 20, Ile-127, and Ser-182; that span reads GAGHAG. 276–290 lines the NAD(+) pocket; the sequence is GPRYCPSIEDKIVRF. Gln-373 is a binding site for FAD.

The protein belongs to the MnmG family. In terms of assembly, homodimer. Heterotetramer of two MnmE and two MnmG subunits. FAD serves as cofactor.

The protein resides in the cytoplasm. Functionally, NAD-binding protein involved in the addition of a carboxymethylaminomethyl (cmnm) group at the wobble position (U34) of certain tRNAs, forming tRNA-cmnm(5)s(2)U34. This chain is tRNA uridine 5-carboxymethylaminomethyl modification enzyme MnmG, found in Streptococcus pyogenes serotype M2 (strain MGAS10270).